A 98-amino-acid chain; its full sequence is Feather keratin 4 (98 aa).

N-acetylserine is present on Ser2.

The protein belongs to the avian keratin family. As to quaternary structure, the avian keratins (F-ker, S-ker, C-ker and B-ker) are a complex mixture of very similar polypeptides.

The polypeptide is Feather keratin 4 (Gallus gallus (Chicken)).